The chain runs to 97 residues: U6-theraphotoxin-Hhn1a 3 (97 aa).

An N-terminal signal peptide occupies residues 1 to 33; sequence MLIKQFSRRSKNTKVQILLAFAALFVLAVGSYA. The propeptide occupies 34–61; sequence SESKKLDLRDALFSAMFSADYQLNPQER. Intrachain disulfides connect Cys-63–Cys-77, Cys-70–Cys-82, and Cys-76–Cys-89.

The protein belongs to the neurotoxin 10 (Hwtx-1) family. 12 (Hntx-12) subfamily. In terms of tissue distribution, expressed by the venom gland.

The protein resides in the secreted. Functionally, ion channel inhibitor. The polypeptide is U6-theraphotoxin-Hhn1a 3 (Cyriopagopus hainanus (Chinese bird spider)).